The chain runs to 2005 residues: Sodium channel protein type 2 subunit alpha (2005 aa).

Residues 1-129 (MARSVLVPPG…KLAIKILVHS (129 aa)) are Cytoplasmic-facing. Ser4 is subject to Phosphoserine. Residues 28 to 61 (RIAEEKAKRPKQERKDEDDENGPKPNSDLEAGKS) are disordered. A Glycyl lysine isopeptide (Lys-Gly) (interchain with G-Cter in SUMO1) cross-link involves residue Lys38. Residues 111–456 (ILTPFNPIRK…QQMLEQLKKQ (346 aa)) form an I repeat. A helical membrane pass occupies residues 130–148 (LFNVLIMCTILTNCVFMTM). At 149 to 155 (SNPPDWT) the chain is on the extracellular side. Residues 156–176 (KNVEYTFTGIYTFESLIKILA) form a helical membrane-spanning segment. Residues 177–190 (RGFCLEDFTFLRNP) lie on the Cytoplasmic side of the membrane. The helical transmembrane segment at 191–208 (WNWLDFTVITFAYVTEFV) threads the bilayer. Residues 209–214 (NLGNVS) are Extracellular-facing. N-linked (GlcNAc...) asparagine glycosylation is present at Asn212. A helical transmembrane segment spans residues 215–231 (ALRTFRVLRALKTISVI). Residues 232 to 250 (PGLKTIVGALIQSVKKLSD) are Cytoplasmic-facing. A helical membrane pass occupies residues 251 to 270 (VMILTVFCLSVFALIGLQLF). Topologically, residues 271–369 (MGNLRNKCLQ…PNYGYTSFDT (99 aa)) are extracellular. A disulfide bond links Cys278 and Cys338. N-linked (GlcNAc...) asparagine glycans are attached at residues Asn285, Asn291, Asn297, Asn303, Asn308, and Asn340. An intramembrane region (pore-forming) is located at residues 370-394 (FSWAFLSLFRLMTQDFWENLYQLTL). Topologically, residues 395-401 (RAAGKTY) are extracellular. The helical transmembrane segment at 402–422 (MIFFVLVIFLGSFYLINLILA) threads the bilayer. At 423–759 (VVAMAYEEQN…HVVNLVVMDP (337 aa)) the chain is on the cytoplasmic side. Ser468, Ser471, Ser484, Ser526, Ser528, Ser531, Ser553, Ser554, and Ser558 each carry phosphoserine. Residues 494–529 (SSKSEKELKNRRKKKKQKEQAGEEEKEDAVRKSASE) form a disordered region. The segment covering 511-529 (KEQAGEEEKEDAVRKSASE) has biased composition (basic and acidic residues). Residue Ser554 is modified to Phosphoserine; by PKC; in vitro. 2 positions are modified to phosphoserine; by PKC; in vitro: Ser573 and Ser576. Residues Ser589, Ser610, Ser623, Ser687, Ser688, and Ser721 each carry the phosphoserine modification. The disordered stretch occupies residues 591–634 (NDFADDEHSTFEDNDSRRDSLFVPHRHGERRPSNVSQASRASRG). Residues 596–610 (DEHSTFEDNDSRRDS) are compositionally biased toward basic and acidic residues. The stretch at 741-1013 (CCKPWLKVKH…QIAVGRMQKG (273 aa)) is one II repeat. A helical transmembrane segment spans residues 760 to 778 (FVDLAITICIVLNTLFMAM). The Extracellular portion of the chain corresponds to 779-789 (EHYPMTEQFSS). A helical transmembrane segment spans residues 790–809 (VLSVGNLVFTGIFTAEMFLK). Residues 810 to 823 (IIAMDPYYYFQEGW) lie on the Cytoplasmic side of the membrane. Residues 824-843 (NIFDGFIVSLSLMELGLANV) traverse the membrane as a helical segment. The Extracellular portion of the chain corresponds to 844-845 (EG). Residues 846–863 (LSVLRSFRLLRVFKLAKS) traverse the membrane as a helical segment. Over 864-879 (WPTLNMLIKIIGNSVG) the chain is Cytoplasmic. Residues 880 to 898 (ALGNLTLVLAIIVFIFAVV) form a helical membrane-spanning segment. Residues 899–927 (GMQLFGKSYKECVCKISNDCELPRWHMHH) lie on the Extracellular side of the membrane. A disulfide bridge connects residues Cys912 and Cys918. The segment at 917 to 918 (DC) is binds SCN2B. The segment at residues 928 to 948 (FFHSFLIVFRVLCGEWIETMW) is an intramembrane region (pore-forming). At 949-961 (DCMEVAGQTMCLT) the chain is on the extracellular side. Cys950 and Cys959 are joined by a disulfide. Residues 962–982 (VFMMVMVIGNLVVLNLFLALL) traverse the membrane as a helical segment. Residues 983–1209 (LSSFSSDNLA…TCYKIVEHNW (227 aa)) are Cytoplasmic-facing. The disordered stretch occupies residues 1120 to 1166 (EEFSSESDMEESKEKLNATSSSEGSTVDIGAPAEGEQPEAEPEESLE). Residues 1155-1166 (EQPEAEPEESLE) are compositionally biased toward acidic residues. The III repeat unit spans residues 1190-1504 (KGKLWWNLRK…KKYYNAMKKL (315 aa)). The helical transmembrane segment at 1210-1227 (FETFIVFMILLSSGALAF) threads the bilayer. Over 1228–1240 (EDIYIEQRKTIKT) the chain is Extracellular. A helical transmembrane segment spans residues 1241–1259 (MLEYADKVFTYIFILEMLL). Topologically, residues 1260–1273 (KWVAYGFQMYFTNA) are cytoplasmic. Residues 1274 to 1292 (WCWLDFLIVDVSLVSLTAN) traverse the membrane as a helical segment. Residues 1293–1300 (ALGYSELG) are Extracellular-facing. Residues 1301–1319 (AIKSLRTLRALRPLRALSR) traverse the membrane as a helical segment. Residues 1320 to 1336 (FEGMRVVVNALLGAIPS) are Cytoplasmic-facing. Residues 1337–1356 (IMNVLLVCLIFWLIFSIMGV) traverse the membrane as a helical segment. At 1357 to 1408 (NLFAGKFYHCINYTTGEMFDVSVVNNYSECQALIESNQTARWKNVKVNFDNV) the chain is on the extracellular side. Cysteines 1366 and 1386 form a disulfide. 3 N-linked (GlcNAc...) asparagine glycosylation sites follow: Asn1368, Asn1382, and Asn1393. Residues 1409-1430 (GLGYLSLLQVATFKGWMDIMYA) constitute an intramembrane region (pore-forming). Residues 1431-1447 (AVDSRNVELQPKYEDNL) are Extracellular-facing. A helical membrane pass occupies residues 1448-1469 (YMYLYFVIFIIFGSFFTLNLFI). Topologically, residues 1470–1532 (GVIIDNFNQQ…MVFDFVTKQV (63 aa)) are cytoplasmic. Residue Ser1506 is modified to Phosphoserine; by PKC. Residues 1513–1811 (IPRPANKFQG…WEKFDPDATQ (299 aa)) form an IV repeat. Residues 1533–1550 (FDISIMILICLNMVTMMV) form a helical membrane-spanning segment. The Extracellular portion of the chain corresponds to 1551-1561 (ETDDQSQEMTN). Residues 1562-1580 (ILYWINLVFIVLFTGECVL) traverse the membrane as a helical segment. At 1581–1592 (KLISLRHYYFTI) the chain is on the cytoplasmic side. The chain crosses the membrane as a helical span at residues 1593 to 1610 (GWNIFDFVVVILSIVGMF). At 1611 to 1623 (LAELIEKYFVSPT) the chain is on the extracellular side. Residues 1624-1640 (LFRVIRLARIGRILRLI) form a helical membrane-spanning segment. The Cytoplasmic segment spans residues 1641-1659 (KGAKGIRTLLFALMMSLPA). Residues 1660-1677 (LFNIGLLLFLVMFIYAIF) traverse the membrane as a helical segment. The Extracellular segment spans residues 1678 to 1699 (GMSNFAYVKREVGIDDMFNFET). Residues 1700-1722 (FGNSMICLFQITTSAGWDGLLAP) constitute an intramembrane region (pore-forming). Residues 1723-1752 (ILNSGPPDCDPEKDHPGSSVKGDCGNPSVG) are Extracellular-facing. A disulfide bond links Cys1731 and Cys1746. The helical transmembrane segment at 1753 to 1775 (IFFFVSYIIISFLVVVNMYIAVI) threads the bilayer. Residues 1776–2005 (LENFSVATEE…KGKDIRESKK (230 aa)) are Cytoplasmic-facing. Positions 1905–1934 (EEVSAIVIQRAYRRYLLKQKVKKVSSIYKK) constitute an IQ domain. The residue at position 1930 (Ser1930) is a Phosphoserine. Basic and acidic residues predominate over residues 1933 to 1964 (KKDKGKEDEGTPIKEDIITDKLNENSTPEKTD). Positions 1933 to 2005 (KKDKGKEDEG…KGKDIRESKK (73 aa)) are disordered. Phosphothreonine is present on residues Thr1943, Thr1963, and Thr1966. A Phosphoserine modification is found at Ser1971. Positions 1979-2005 (TKPEKEKFEKDKSEKEDKGKDIRESKK) are enriched in basic and acidic residues.

The protein belongs to the sodium channel (TC 1.A.1.10) family. Nav1.2/SCN2A subfamily. Heterooligomer of a large alpha subunit and a smaller beta subunit. Heterooligomer with SCN2B or SCN4B; disulfide-linked. Heterooligomer with SCN1B or SCN3B; non-covalently linked. Interacts with NEDD4L. Interacts with CALM. Interacts with TMEM233. Interacts with the conotoxin GVIIJ. Interacts with the scorpion toxin BMK M1. May be ubiquitinated by NEDD4L; which would promote its endocytosis. Post-translationally, phosphorylation at Ser-1506 by PKC in a highly conserved cytoplasmic loop slows inactivation of the sodium channel and reduces peak sodium currents. In terms of processing, sumoylated at Lys-38. Sumoylation is induced by hypoxia, increases voltage-gated sodium current and mediates the early response to acute hypoxia in neurons. Sumoylated SCN2A is located at the cell membrane. As to expression, expressed in brain (at protein level). Expressed in cerebellar granule neurons (at protein level).

The protein resides in the cell membrane. The catalysed reaction is Na(+)(in) = Na(+)(out). Its function is as follows. Mediates the voltage-dependent sodium ion permeability of excitable membranes. Assuming opened or closed conformations in response to the voltage difference across the membrane, the protein forms a sodium-selective channel through which Na(+) ions may pass in accordance with their electrochemical gradient. Implicated in the regulation of hippocampal replay occurring within sharp wave ripples (SPW-R) important for memory. This chain is Sodium channel protein type 2 subunit alpha, found in Rattus norvegicus (Rat).